The sequence spans 377 residues: Odorant receptor 30a (377 aa).

The Cytoplasmic segment spans residues 1–34; sequence MELKSMDPVEMPIFGSTLKLMKFWSYLFVHNWRR. The helical transmembrane segment at 35–55 threads the bilayer; sequence YVAMTPYIIINCTQYVDIYLS. At 56-65 the chain is on the extracellular side; sequence TESLDFIIRN. Residues 66 to 86 form a helical membrane-spanning segment; that stretch reads VYLAVLFTNTVVRGVLLCVQR. Residues 87 to 127 lie on the Cytoplasmic side of the membrane; it reads FSYERFINILKSFYIELLQSDDPIINILVKETTRLSVLISR. Residues 128–148 form a helical membrane-spanning segment; the sequence is INLLMGCCTCIGFVTYPIFGS. Residues 149-172 lie on the Extracellular side of the membrane; sequence ERVLPYGMYLPTIDEYKYASPYYE. The helical transmembrane segment at 173 to 193 threads the bilayer; sequence IFFVIQAIMAPMGCCMYIPYT. The Cytoplasmic segment spans residues 194–254; it reads NMVVTFTLFA…SMNALNTHLH (61 aa). Residues 255 to 275 traverse the membrane as a helical segment; sequence LVEFLCFGAMLCVLLFSLIIA. Residues 276–280 lie on the Extracellular side of the membrane; it reads QTIAQ. A helical transmembrane segment spans residues 281 to 301; the sequence is TVIVIAYMVMIFANSVVLYYV. Over 302 to 344 the chain is Cytoplasmic; sequence ANELYFQSFDIAIAAYESNWMDFDVDTQKTLKFLIMRSQKPLA. Residues 345-365 form a helical membrane-spanning segment; the sequence is ILVGGTYPMNLKMLQSLLNAI. At 366 to 377 the chain is on the extracellular side; it reads YSFFTLLRRVYG.

Belongs to the insect chemoreceptor superfamily. Heteromeric odorant receptor channel (TC 1.A.69) family. Or30a subfamily. As to quaternary structure, interacts with Orco. Complexes exist early in the endomembrane system in olfactory sensory neurons (OSNs), coupling these complexes to the conserved ciliary trafficking pathway.

It localises to the cell membrane. In terms of biological role, odorant receptor which mediates acceptance or avoidance behavior, depending on its substrates. The odorant receptor repertoire encodes a large collection of odor stimuli that vary widely in identity, intensity, and duration. May form a complex with Orco to form odorant-sensing units, providing sensitive and prolonged odorant signaling and calcium permeability. Involved in the behavioral responses to propyl acetate and anisole. In Drosophila melanogaster (Fruit fly), this protein is Odorant receptor 30a (Or30a).